Here is a 348-residue protein sequence, read N- to C-terminus: Inositol 2-dehydrogenase/D-chiro-inositol 3-dehydrogenase (348 aa).

This sequence belongs to the Gfo/Idh/MocA family. As to quaternary structure, homotetramer.

The catalysed reaction is myo-inositol + NAD(+) = scyllo-inosose + NADH + H(+). The enzyme catalyses 1D-chiro-inositol + NAD(+) = scyllo-inosine + NADH + H(+). It participates in polyol metabolism; myo-inositol degradation into acetyl-CoA; acetyl-CoA from myo-inositol: step 1/7. Its function is as follows. Involved in the oxidation of myo-inositol (MI) and D-chiro-inositol (DCI) to 2-keto-myo-inositol (2KMI or 2-inosose) and 1-keto-D-chiro-inositol (1KDCI), respectively. The protein is Inositol 2-dehydrogenase/D-chiro-inositol 3-dehydrogenase of Halalkalibacterium halodurans (strain ATCC BAA-125 / DSM 18197 / FERM 7344 / JCM 9153 / C-125) (Bacillus halodurans).